The primary structure comprises 436 residues: GTPase Obg (436 aa).

Positions 2–160 (SMFLDTAKIQ…RELLLELKVL (159 aa)) constitute an Obg domain. An OBG-type G domain is found at 161-338 (ADVGLVGFPS…LLDATAELLD (178 aa)). GTP-binding positions include 167–174 (GFPSVGKS), 192–196 (FTTIV), 214–217 (DLPG), 284–287 (NKMD), and 319–321 (SSL). Positions 174 and 194 each coordinate Mg(2+). The OCT domain occupies 358 to 436 (GFDEEAPAFE…IGKFEFEFVD (79 aa)).

It belongs to the TRAFAC class OBG-HflX-like GTPase superfamily. OBG GTPase family. In terms of assembly, monomer. Mg(2+) is required as a cofactor.

It is found in the cytoplasm. Its function is as follows. An essential GTPase which binds GTP, GDP and possibly (p)ppGpp with moderate affinity, with high nucleotide exchange rates and a fairly low GTP hydrolysis rate. Plays a role in control of the cell cycle, stress response, ribosome biogenesis and in those bacteria that undergo differentiation, in morphogenesis control. This is GTPase Obg from Streptococcus sanguinis (strain SK36).